The chain runs to 488 residues: Bifunctional protein HldE (488 aa).

Residues 1 to 330 (MDRKSIESIF…NAVALAHSDS (330 aa)) are ribokinase. 205–208 (NRRE) lines the ATP pocket. Residue Asp-275 is part of the active site. A cytidylyltransferase region spans residues 356–488 (FTNGCFDLLH…IIERVLERYS (133 aa)).

In the N-terminal section; belongs to the carbohydrate kinase PfkB family. It in the C-terminal section; belongs to the cytidylyltransferase family. In terms of assembly, homodimer.

The enzyme catalyses D-glycero-beta-D-manno-heptose 7-phosphate + ATP = D-glycero-beta-D-manno-heptose 1,7-bisphosphate + ADP + H(+). It carries out the reaction D-glycero-beta-D-manno-heptose 1-phosphate + ATP + H(+) = ADP-D-glycero-beta-D-manno-heptose + diphosphate. It participates in nucleotide-sugar biosynthesis; ADP-L-glycero-beta-D-manno-heptose biosynthesis; ADP-L-glycero-beta-D-manno-heptose from D-glycero-beta-D-manno-heptose 7-phosphate: step 1/4. The protein operates within nucleotide-sugar biosynthesis; ADP-L-glycero-beta-D-manno-heptose biosynthesis; ADP-L-glycero-beta-D-manno-heptose from D-glycero-beta-D-manno-heptose 7-phosphate: step 3/4. Functionally, catalyzes the phosphorylation of D-glycero-D-manno-heptose 7-phosphate at the C-1 position to selectively form D-glycero-beta-D-manno-heptose-1,7-bisphosphate. In terms of biological role, catalyzes the ADP transfer from ATP to D-glycero-beta-D-manno-heptose 1-phosphate, yielding ADP-D-glycero-beta-D-manno-heptose. The polypeptide is Bifunctional protein HldE (Pelobacter propionicus (strain DSM 2379 / NBRC 103807 / OttBd1)).